Here is a 603-residue protein sequence, read N- to C-terminus: Geraniol synthase, chloroplastic (603 aa).

A chloroplast-targeting transit peptide spans 1–35 (MSSISQKVVIGLNKAAANNNLQNLDRRGFKTRCVS). (2E)-geranyl diphosphate is bound by residues Arg319, Asp356, Asp360, Arg497, and Asp500. Positions 356 and 360 each coordinate Mg(2+). The short motif at 356–360 (DDVYD) is the DDXXD motif element. Residues Asp500, Thr504, and Glu508 each contribute to the Mg(2+) site.

It belongs to the terpene synthase family. Tpsb subfamily. As to quaternary structure, monomer. Mg(2+) is required as a cofactor. Mn(2+) serves as cofactor.

Its subcellular location is the plastid. The protein resides in the chloroplast. It carries out the reaction (2E)-geranyl diphosphate + H2O = (2E)-geraniol + diphosphate. Its pathway is secondary metabolite biosynthesis; terpenoid biosynthesis. Monoterpene synthase (mono-TPS) involved in the biosynthesis of monoterpenes natural products. Catalyzes the conversion of (2E)-geranyl diphosphate (GPP) into geraniol. The polypeptide is Geraniol synthase, chloroplastic (Perilla frutescens var. hirtella (Perilla citriodora)).